Reading from the N-terminus, the 120-residue chain is Small ribosomal subunit protein bS16 (120 aa).

Residues 84–120 (KRESRNNPQQGQPKKKAQERAAAAAAAAEKAASEAAA) are disordered. Positions 103-120 (RAAAAAAAAEKAASEAAA) are enriched in low complexity.

Belongs to the bacterial ribosomal protein bS16 family.

In Beijerinckia indica subsp. indica (strain ATCC 9039 / DSM 1715 / NCIMB 8712), this protein is Small ribosomal subunit protein bS16.